The following is a 271-amino-acid chain: Ribosomal RNA small subunit methyltransferase A (271 aa).

The S-adenosyl-L-methionine site is built by N28, L30, G54, E75, D99, and N117.

Belongs to the class I-like SAM-binding methyltransferase superfamily. rRNA adenine N(6)-methyltransferase family. RsmA subfamily.

The protein localises to the cytoplasm. The catalysed reaction is adenosine(1518)/adenosine(1519) in 16S rRNA + 4 S-adenosyl-L-methionine = N(6)-dimethyladenosine(1518)/N(6)-dimethyladenosine(1519) in 16S rRNA + 4 S-adenosyl-L-homocysteine + 4 H(+). Its function is as follows. Specifically dimethylates two adjacent adenosines (A1518 and A1519) in the loop of a conserved hairpin near the 3'-end of 16S rRNA in the 30S particle. May play a critical role in biogenesis of 30S subunits. The chain is Ribosomal RNA small subunit methyltransferase A from Thermus thermophilus (strain ATCC BAA-163 / DSM 7039 / HB27).